The primary structure comprises 723 residues: Fatty acid oxidation complex subunit alpha (723 aa).

The segment at 1 to 189 (MIYQANTLQV…KVGLLDAIVE (189 aa)) is enoyl-CoA hydratase/isomerase. Residue D296 participates in substrate binding. The interval 311–723 (NKATERAAVL…FYDGQQASSL (413 aa)) is 3-hydroxyacyl-CoA dehydrogenase. Residues M325, D344, 401–403 (VVE), K408, and S430 each bind NAD(+). Catalysis depends on H451, which acts as the For 3-hydroxyacyl-CoA dehydrogenase activity. An NAD(+)-binding site is contributed by N454. 2 residues coordinate substrate: N501 and Y661.

This sequence in the N-terminal section; belongs to the enoyl-CoA hydratase/isomerase family. It in the C-terminal section; belongs to the 3-hydroxyacyl-CoA dehydrogenase family. In terms of assembly, heterotetramer of two alpha chains (FadB) and two beta chains (FadA).

It carries out the reaction a (3S)-3-hydroxyacyl-CoA + NAD(+) = a 3-oxoacyl-CoA + NADH + H(+). It catalyses the reaction a (3S)-3-hydroxyacyl-CoA = a (2E)-enoyl-CoA + H2O. The enzyme catalyses a 4-saturated-(3S)-3-hydroxyacyl-CoA = a (3E)-enoyl-CoA + H2O. The catalysed reaction is (3S)-3-hydroxybutanoyl-CoA = (3R)-3-hydroxybutanoyl-CoA. It carries out the reaction a (3Z)-enoyl-CoA = a 4-saturated (2E)-enoyl-CoA. It catalyses the reaction a (3E)-enoyl-CoA = a 4-saturated (2E)-enoyl-CoA. The protein operates within lipid metabolism; fatty acid beta-oxidation. Its function is as follows. Involved in the aerobic and anaerobic degradation of long-chain fatty acids via beta-oxidation cycle. Catalyzes the formation of 3-oxoacyl-CoA from enoyl-CoA via L-3-hydroxyacyl-CoA. It can also use D-3-hydroxyacyl-CoA and cis-3-enoyl-CoA as substrate. In Vibrio atlanticus (strain LGP32) (Vibrio splendidus (strain Mel32)), this protein is Fatty acid oxidation complex subunit alpha.